Consider the following 1111-residue polypeptide: Lon protease homolog, mitochondrial (1111 aa).

The transit peptide at 1–21 directs the protein to the mitochondrion; the sequence is MLRSSRSRLVTRNILLRQFKN. Disordered stretches follow at residues 85–177 and 288–311; these read IQLK…AKQP and PPTSEQNLKDESDVSKSEGVENNE. The segment covering 88 to 125 has biased composition (basic and acidic residues); that stretch reads KQDDKGKDIDQPESENRKKEEEQVPTEEKDNDTAKESE. Residues 126 to 135 are compositionally biased toward polar residues; sequence TSQQRDSVAE. The segment covering 145–167 has biased composition (gly residues); it reads GASGNGESSGNGSGDDGNNGSGN. In terms of domain architecture, Lon N-terminal spans 185–450; that stretch reads VMALPISRRP…KALTVLKKEL (266 aa). Residues 294–306 show a composition bias toward basic and acidic residues; sequence NLKDESDVSKSEG. 602 to 609 lines the ATP pocket; the sequence is GPPGVGKT. 2 stretches are compositionally biased toward basic and acidic residues: residues 819-835 and 853-865; these read ENEEVKDQKDIKVKQSE and ELIKTQKSHDNKG. The segment at 819–866 is disordered; sequence ENEEVKDQKDIKVKQSENKSSAEASTVESTTEENELIKTQKSHDNKGS. The Lon proteolytic domain occupies 899 to 1085; that stretch reads STPPGVVMGL…EDVFQRLFGD (187 aa). Residues Ser991 and Lys1034 contribute to the active site.

It belongs to the peptidase S16 family. In terms of assembly, homohexamer or homoheptamer. Organized in a ring with a central cavity.

The protein resides in the mitochondrion matrix. It carries out the reaction Hydrolysis of proteins in presence of ATP.. ATP-dependent serine protease that mediates the selective degradation of misfolded, unassembled or oxidatively damaged polypeptides as well as certain short-lived regulatory proteins in the mitochondrial matrix. May also have a chaperone function in the assembly of inner membrane protein complexes. Participates in the regulation of mitochondrial gene expression and in the maintenance of the integrity of the mitochondrial genome. Binds to mitochondrial DNA in a site-specific manner. The chain is Lon protease homolog, mitochondrial from Kluyveromyces lactis (strain ATCC 8585 / CBS 2359 / DSM 70799 / NBRC 1267 / NRRL Y-1140 / WM37) (Yeast).